The sequence spans 783 residues: Pre-mRNA-splicing ATP-dependent RNA helicase prp28 (783 aa).

Residues 1-52 (MPGPPATAPPPEPIERPPTPPPPPPEDSAAPPPPPDMSAPPPPPQDELPPAP) are compositionally biased toward pro residues. The disordered stretch occupies residues 1–193 (MPGPPATAPP…VDEDEAAAQA (193 aa)). Composition is skewed to basic and acidic residues over residues 75-84 (ELVRKKREAD) and 94-114 (SKKE…EQSR). The span at 118 to 135 (STNGASDTASVRSESATP) shows a compositional bias: polar residues. The segment covering 167-182 (SSNGNGNSNSNSNSNG) has biased composition (low complexity). The Q motif signature appears at 343–371 (RSWAESGLPSRLLDLVHRVGYKDPTPIQR). Residues 374-583 (IPIAMQSRDL…RKYLRRPAIV (210 aa)) form the Helicase ATP-binding domain. 387-394 (AVTGSGKT) provides a ligand contact to ATP. Residues 502 to 505 (DEAD) carry the DEAD box motif. The Helicase C-terminal domain maps to 594 to 757 (TVEQRVELIA…RVPDELRKHE (164 aa)). Positions 752–783 (ELRKHEAAQQKPTRGFSKKNDESSAFGGKGGW) are disordered.

It belongs to the DEAD box helicase family. DDX23/PRP28 subfamily. Component of the U5 snRNP complex.

It localises to the cytoplasm. The protein localises to the nucleus. It catalyses the reaction ATP + H2O = ADP + phosphate + H(+). In terms of biological role, ATP-dependent RNA helicase involved in mRNA splicing. May destabilize the U1/5'-splice site duplex to permit an effective competition for the 5'-splice site by the U6 snRNA, resulting in the switch between U1 and U6 at the 5'-splice site. May also act to unwind the U4/U6 base-pairing interaction in the U4/U6/U5 snRNP, facilitating the first covalent step of splicing. This is Pre-mRNA-splicing ATP-dependent RNA helicase prp28 (prp28) from Aspergillus terreus (strain NIH 2624 / FGSC A1156).